Here is a 200-residue protein sequence, read N- to C-terminus: MTTPAAPRLRIGVMGGTFDPIHNGHLVAASEVQQHLQLDEVIFVPTGQPWQKQTVTDGEHRYLMTVIATAANPRFTVSRVDIDRAGTTYTIDTLRDIRRTHPDAELFFITGADAIQQILGWKDVAELWDLAHFVAVTRPGHDLTESGLPHADVRLLEVPALAISSTDCRARVGRGFPVWYLVPDGVVQYISKHHLYRSPQ.

It belongs to the NadD family.

The catalysed reaction is nicotinate beta-D-ribonucleotide + ATP + H(+) = deamido-NAD(+) + diphosphate. It participates in cofactor biosynthesis; NAD(+) biosynthesis; deamido-NAD(+) from nicotinate D-ribonucleotide: step 1/1. Catalyzes the reversible adenylation of nicotinate mononucleotide (NaMN) to nicotinic acid adenine dinucleotide (NaAD). The sequence is that of Probable nicotinate-nucleotide adenylyltransferase from Clavibacter michiganensis subsp. michiganensis (strain NCPPB 382).